The sequence spans 339 residues: UDP-N-acetylenolpyruvoylglucosamine reductase (339 aa).

Residues 16–188 (GIAATARYYS…LQVTLRLNKQ (173 aa)) enclose the FAD-binding PCMH-type domain. Arginine 164 is an active-site residue. The Proton donor role is filled by serine 238. Glutamate 334 is a catalytic residue.

Belongs to the MurB family. Requires FAD as cofactor.

The protein resides in the cytoplasm. The catalysed reaction is UDP-N-acetyl-alpha-D-muramate + NADP(+) = UDP-N-acetyl-3-O-(1-carboxyvinyl)-alpha-D-glucosamine + NADPH + H(+). It participates in cell wall biogenesis; peptidoglycan biosynthesis. Functionally, cell wall formation. This Amoebophilus asiaticus (strain 5a2) protein is UDP-N-acetylenolpyruvoylglucosamine reductase.